We begin with the raw amino-acid sequence, 388 residues long: Cell adhesion molecule 4 (388 aa).

The first 20 residues, 1–20 (MGRARRFQWPLLLLWAAAAG), serve as a signal peptide directing secretion. The Ig-like V-type domain occupies 21–119 (PGAGQEVQTE…DTHHQIATLT (99 aa)). Topologically, residues 21 to 324 (PGAGQEVQTE…VEAQTSVPYA (304 aa)) are extracellular. N-linked (GlcNAc...) asparagine glycosylation is found at N31 and N67. 3 disulfide bridges follow: C44-C104, C145-C199, and C245-C291. 2 consecutive Ig-like C2-type domains span residues 124–219 (PENP…YVLD) and 224–307 (PTAR…YVLV). N286 is a glycosylation site (N-linked (GlcNAc...) asparagine). A helical membrane pass occupies residues 325 to 345 (IVGGILALLVFLIICVLVGMV). Residues 346-388 (WCSVRQKGSYLTHEASGLDEQGEAREAFLNGSDGHKRKEEFFI) lie on the Cytoplasmic side of the membrane. A Phosphoserine modification is found at S361.

Belongs to the nectin family. As to quaternary structure, monomer and homodimer. N-glycosylated. As to expression, expressed in brain, prostate, brain, kidney and some other organs.

Its subcellular location is the membrane. Involved in the cell-cell adhesion. Has calcium- and magnesium-independent cell-cell adhesion activity. May have tumor-suppressor activity. This Homo sapiens (Human) protein is Cell adhesion molecule 4 (CADM4).